Reading from the N-terminus, the 376-residue chain is Enoyl-[acyl-carrier-protein] reductase, mitochondrial (376 aa).

Tyr72 functions as the Proton donor in the catalytic mechanism. NADP(+) contacts are provided by residues Asn154, 182 to 185 (TSAV), 205 to 207 (RDR), 280 to 283 (YGGM), 305 to 307 (YWI), and Lys369.

It belongs to the zinc-containing alcohol dehydrogenase family. Quinone oxidoreductase subfamily. As to quaternary structure, homodimer.

The protein resides in the mitochondrion matrix. It catalyses the reaction a 2,3-saturated acyl-[ACP] + NADP(+) = a (2E)-enoyl-[ACP] + NADPH + H(+). Its function is as follows. Catalyzes the NADPH-dependent reduction of trans-2-enoyl thioesters in mitochondrial fatty acid synthesis (fatty acid synthesis type II). Fatty acid chain elongation in mitochondria uses acyl carrier protein (ACP) as an acyl group carrier, but the enzyme accepts both ACP and CoA thioesters as substrates in vitro. Required for respiration and the maintenance of the mitochondrial compartment. This Eremothecium gossypii (strain ATCC 10895 / CBS 109.51 / FGSC 9923 / NRRL Y-1056) (Yeast) protein is Enoyl-[acyl-carrier-protein] reductase, mitochondrial (ETR1).